Reading from the N-terminus, the 86-residue chain is Centromere protein W (86 aa).

The protein belongs to the CENP-W/WIP1 family. In terms of assembly, heterodimer with CENPT; this dimer coassembles with CENPS-CENPX heterodimers at centromeres to form the tetrameric CENP-T-W-S-X complex, which is a subcomplex of the large constitutive centromere-associated network (CCAN, also known as the interphase centromere complex or ICEN). Interacts with NPM1.

It is found in the nucleus. The protein resides in the chromosome. Its subcellular location is the centromere. It localises to the kinetochore. The protein localises to the nucleus matrix. It is found in the nucleolus. Component of the CENPA-NAC (nucleosome-associated) complex, a complex that plays a central role in assembly of kinetochore proteins, mitotic progression and chromosome segregation. The CENPA-NAC complex recruits the CENPA-CAD (nucleosome distal) complex and may be involved in incorporation of newly synthesized CENPA into centromeres. Part of a nucleosome-associated complex that binds specifically to histone H3-containing nucleosomes at the centromere, as opposed to nucleosomes containing CENPA. Component of the heterotetrameric CENP-T-W-S-X complex that binds and supercoils DNA, and plays an important role in kinetochore assembly. CENPW has a fundamental role in kinetochore assembly and function. It is one of the inner kinetochore proteins, with most further proteins binding downstream. Required for normal chromosome organization and normal progress through mitosis. The chain is Centromere protein W (Cenpw) from Rattus norvegicus (Rat).